Consider the following 86-residue polypeptide: Small ribosomal subunit protein uS15 (86 aa).

The protein belongs to the universal ribosomal protein uS15 family. In terms of assembly, part of the 30S ribosomal subunit. Forms a bridge to the 50S subunit in the 70S ribosome, contacting the 23S rRNA.

One of the primary rRNA binding proteins, it binds directly to 16S rRNA where it helps nucleate assembly of the platform of the 30S subunit by binding and bridging several RNA helices of the 16S rRNA. In terms of biological role, forms an intersubunit bridge (bridge B4) with the 23S rRNA of the 50S subunit in the ribosome. The protein is Small ribosomal subunit protein uS15 of Mycoplasma genitalium (strain ATCC 33530 / DSM 19775 / NCTC 10195 / G37) (Mycoplasmoides genitalium).